A 1014-amino-acid chain; its full sequence is Isoleucine--tRNA ligase (1014 aa).

The 'HIGH' region motif lies at P48 to H58. The short motif at K628–S632 is the 'KMSKS' region element. K631 is a binding site for ATP.

This sequence belongs to the class-I aminoacyl-tRNA synthetase family. IleS type 2 subfamily. As to quaternary structure, monomer. Zn(2+) serves as cofactor.

The protein localises to the cytoplasm. It carries out the reaction tRNA(Ile) + L-isoleucine + ATP = L-isoleucyl-tRNA(Ile) + AMP + diphosphate. In terms of biological role, catalyzes the attachment of isoleucine to tRNA(Ile). As IleRS can inadvertently accommodate and process structurally similar amino acids such as valine, to avoid such errors it has two additional distinct tRNA(Ile)-dependent editing activities. One activity is designated as 'pretransfer' editing and involves the hydrolysis of activated Val-AMP. The other activity is designated 'posttransfer' editing and involves deacylation of mischarged Val-tRNA(Ile). In Dehalococcoides mccartyi (strain ATCC BAA-2266 / KCTC 15142 / 195) (Dehalococcoides ethenogenes (strain 195)), this protein is Isoleucine--tRNA ligase.